The sequence spans 549 residues: Serine/threonine-protein phosphatase PPQ (549 aa).

Residues 1–13 (MRRSPSRSNNNFA) show a composition bias toward polar residues. Disordered stretches follow at residues 1 to 50 (MRRS…RSLP), 64 to 85 (YNTL…DNLL), 133 to 158 (TSST…NYSS), and 189 to 219 (SRVK…PKSS). Composition is skewed to low complexity over residues 16–32 (NCST…TTPS) and 68–83 (ASAG…SNDN). Residues 205–217 (APSSPTSGIPNPK) are compositionally biased toward polar residues. Mn(2+) contacts are provided by Asp-301, His-303, Asp-329, and Asn-361. Catalysis depends on His-362, which acts as the Proton donor. Residues His-410 and His-485 each contribute to the Mn(2+) site.

Belongs to the PPP phosphatase family. PP-Z subfamily. The cofactor is Mn(2+).

It carries out the reaction O-phospho-L-seryl-[protein] + H2O = L-seryl-[protein] + phosphate. It catalyses the reaction O-phospho-L-threonyl-[protein] + H2O = L-threonyl-[protein] + phosphate. In terms of biological role, phosphatase involved in the regulation of protein synthesis. Affects translational accuracy. This Saccharomyces cerevisiae (strain ATCC 204508 / S288c) (Baker's yeast) protein is Serine/threonine-protein phosphatase PPQ (PPQ1).